The following is a 410-amino-acid chain: Extracellular serine proteinase (410 aa).

The signal sequence occupies residues 1–19 (MKRGGLWLLLGLLVLSACS). Positions 20–132 (SNPPAASTQE…IEADQEVRAF (113 aa)) are excised as a propeptide. The Inhibitor I9 domain occupies 45–130 (YIVVYKENAD…AYIEADQEVR (86 aa)). The 272-residue stretch at 139–410 (TWGLDRIDQR…SPNLLLYTPF (272 aa)) folds into the Peptidase S8 domain. Active-site charge relay system residues include Asp171, His204, and Ser356.

Belongs to the peptidase S8 family. Post-translationally, contains 4 Cys residues that form two disulfide bonds. Glycosylated. This proteinase has a 0.7% carbohydrate content.

The protein resides in the secreted. Serine proteinase with preferred activity for amino acids with aromatic side groups at the P1' side of the scissible bond. This chain is Extracellular serine proteinase, found in Thermus sp. (strain Rt41A).